The sequence spans 289 residues: ATP synthase gamma chain (289 aa).

The protein belongs to the ATPase gamma chain family. In terms of assembly, F-type ATPases have 2 components, CF(1) - the catalytic core - and CF(0) - the membrane proton channel. CF(1) has five subunits: alpha(3), beta(3), gamma(1), delta(1), epsilon(1). CF(0) has three main subunits: a, b and c.

The protein resides in the cell inner membrane. Produces ATP from ADP in the presence of a proton gradient across the membrane. The gamma chain is believed to be important in regulating ATPase activity and the flow of protons through the CF(0) complex. This Leptospira biflexa serovar Patoc (strain Patoc 1 / ATCC 23582 / Paris) protein is ATP synthase gamma chain.